Reading from the N-terminus, the 438-residue chain is Transmembrane protein 184C (438 aa).

A run of 7 helical transmembrane segments spans residues 17 to 37 (LVAV…VWEL), 48 to 68 (AWFI…WVIL), 86 to 106 (ILWM…YPGI), 179 to 199 (YTVV…LGIY), 212 to 232 (YLVI…LLFY), 254 to 274 (VVFV…VGVI), and 287 to 307 (AVAT…AAIA). The interval 358–438 (PRKKLFPEDQ…KEPSDKSVDS (81 aa)) is disordered. Low complexity-rich tracts occupy residues 374-390 (SLLS…ASSM) and 404-413 (TVTPQTTPTT). Residue Ser-422 is modified to Phosphoserine. Positions 425–438 (IGEKKEPSDKSVDS) are enriched in basic and acidic residues.

Belongs to the TMEM184 family.

The protein resides in the membrane. Possible tumor suppressor which may play a role in cell growth. In Pongo abelii (Sumatran orangutan), this protein is Transmembrane protein 184C (TMEM184C).